Here is a 565-residue protein sequence, read N- to C-terminus: Probable protease Gilli_2517 (565 aa).

Functionally, probably a dedicated protease for substrate gasdermin bGSDM; cleaves the bGSDM precursor, releasing the pore-forming moiety, which integrates into the membrane and triggers cell death. Involved in defense against bacteriophages. Expression of bGSDM and this neighboring protease is not toxic in E.coli. The sequence is that of Probable protease Gilli_2517 from Gillisia limnaea (strain DSM 15749 / LMG 21470 / R-8282).